Consider the following 307-residue polypeptide: Ornithine carbamoyltransferase (307 aa).

Residues 56–59 (STRT), Gln83, Arg107, and 134–137 (HPCQ) each bind carbamoyl phosphate. L-ornithine is bound by residues Asn165, Asp223, and 227 to 228 (SM). Carbamoyl phosphate-binding positions include 263-264 (CL) and Arg291.

Belongs to the aspartate/ornithine carbamoyltransferase superfamily. OTCase family.

The protein resides in the cytoplasm. The enzyme catalyses carbamoyl phosphate + L-ornithine = L-citrulline + phosphate + H(+). Its pathway is amino-acid biosynthesis; L-arginine biosynthesis; L-arginine from L-ornithine and carbamoyl phosphate: step 1/3. In terms of biological role, reversibly catalyzes the transfer of the carbamoyl group from carbamoyl phosphate (CP) to the N(epsilon) atom of ornithine (ORN) to produce L-citrulline. The sequence is that of Ornithine carbamoyltransferase from Cupriavidus pinatubonensis (strain JMP 134 / LMG 1197) (Cupriavidus necator (strain JMP 134)).